The following is a 500-amino-acid chain: Maturase K (500 aa).

It belongs to the intron maturase 2 family. MatK subfamily.

It is found in the plastid. The protein localises to the chloroplast. Functionally, usually encoded in the trnK tRNA gene intron. Probably assists in splicing its own and other chloroplast group II introns. The polypeptide is Maturase K (Helianthus annuus (Common sunflower)).